The sequence spans 881 residues: EEF1AKMT4-ECE2 readthrough transcript protein (881 aa).

Positions 1-160 (MASPRTPVSP…VHTVDQVLSE (160 aa)) are methyltransferase-like region. Residues 1–178 (MASPRTPVSP…QLFGSHTQLE (178 aa)) are Cytoplasmic-facing. S-adenosyl-L-methionine contacts are provided by Trp26 and Tyr30. Tyr39 carries the post-translational modification Phosphotyrosine. S-adenosyl-L-methionine contacts are provided by residues Trp41, Gly66, 88–89 (DY), 113–114 (DV), and Lys130. His174 carries the phosphoserine modification. A helical; Signal-anchor for type II membrane protein membrane pass occupies residues 179–199 (LVLAGLILVLAALLLGCLVAL). Residues 200 to 881 (WVHRDPAHST…MNPGQLCEVW (682 aa)) lie on the Lumenal side of the membrane. One can recognise a Peptidase M13 domain in the interval 209–881 (TCVTEACIRV…MNPGQLCEVW (673 aa)). Disulfide bonds link Cys210/Cys215, Cys233/Cys866, Cys241/Cys826, Cys297/Cys546, and Cys755/Cys878. 7 N-linked (GlcNAc...) asparagine glycosylation sites follow: Asn277, Asn281, Asn322, Asn382, Asn427, Asn494, and Asn650. His718 is a binding site for Zn(2+). The active site involves Glu719. A Zn(2+)-binding site is contributed by His722. Asn743 and Asn751 each carry an N-linked (GlcNAc...) asparagine glycan. Residue Glu778 coordinates Zn(2+). Catalysis depends on Asp782, which acts as the Proton donor.

In the N-terminal section; belongs to the methyltransferase superfamily. The protein in the C-terminal section; belongs to the peptidase M13 family. The cofactor is Zn(2+). Expressed at high levels in central nervous system. Expressed in adrenal glands, ovary and uterus, and at low levels in heart.

Its subcellular location is the golgi apparatus membrane. The protein localises to the cytoplasmic vesicle. It localises to the secretory vesicle membrane. The enzyme catalyses Hydrolysis of the 21-Trp-|-Val-22 bond in big endothelin to form endothelin 1.. Inhibited by phosphoramidon. In terms of biological role, converts big endothelin-1 to endothelin-1. May also have methyltransferase activity. May play a role in amyloid-beta processing. In Mus musculus (Mouse), this protein is EEF1AKMT4-ECE2 readthrough transcript protein.